We begin with the raw amino-acid sequence, 334 residues long: G-protein coupled receptor 12 (334 aa).

Over 1 to 48 (MNEDPKVNLSGLPRDCIDAGAPENISAAVPSQGSVAESEPELVVNPWD) the chain is Extracellular. Asn-8 and Asn-24 each carry an N-linked (GlcNAc...) asparagine glycan. A helical transmembrane segment spans residues 49 to 69 (IVLCSSGTLICCENAVVVLII). Residues 70 to 78 (FHSPSLRAP) lie on the Cytoplasmic side of the membrane. Residues 79–99 (MFLLIGSLALADLLAGLGLII) traverse the membrane as a helical segment. The Extracellular portion of the chain corresponds to 100-113 (NFVFAYLLQSEATK). The helical transmembrane segment at 114–134 (LVTIGLIVASFSASVCSLLAI) threads the bilayer. Residues 135-158 (TVDRYLSLYYALTYHSERTVTFTY) are Cytoplasmic-facing. Residues 159–179 (VMLVMLWGTSICLGLLPVMGW) traverse the membrane as a helical segment. The Extracellular portion of the chain corresponds to 180 to 199 (NCLRDESTCSVVRPLTKNNA). Residues 200-220 (AILSISFLFMFALMLQLYIQI) form a helical membrane-spanning segment. Residues 221-252 (CKIVMRHAHQIALQHHFLATSHYVTTRKGVST) are Cytoplasmic-facing. A helical membrane pass occupies residues 253-273 (LALILGTFAACWMPFTLYSLI). The Extracellular portion of the chain corresponds to 274–282 (ADYTYPSIY). A helical transmembrane segment spans residues 283 to 303 (TYATLLPATYNSIINPVIYAF). The Cytoplasmic portion of the chain corresponds to 304-334 (RNQEIQKALCLICCGCIPSSLSQRARSPSDV). Cys-317 is lipidated: S-palmitoyl cysteine. Phosphoserine occurs at positions 330 and 332.

It belongs to the G-protein coupled receptor 1 family. As to expression, expressed predominantly in the forebrain and a lesser extent in the hindbrain. Lower expression in the liver.

The protein resides in the cell membrane. In terms of biological role, receptor with constitutive G(s) signaling activity that stimulates cyclic AMP production. Promotes neurite outgrowth and blocks myelin inhibition in neurons. This is G-protein coupled receptor 12 (Gpr12) from Mus musculus (Mouse).